The sequence spans 193 residues: Potassium-transporting ATPase KdpC subunit (193 aa).

A helical membrane pass occupies residues 7–27 (PLVVIFVVLTAVTGLAYPAVM).

The protein belongs to the KdpC family. In terms of assembly, the system is composed of three essential subunits: KdpA, KdpB and KdpC.

It localises to the cell inner membrane. In terms of biological role, part of the high-affinity ATP-driven potassium transport (or Kdp) system, which catalyzes the hydrolysis of ATP coupled with the electrogenic transport of potassium into the cytoplasm. This subunit acts as a catalytic chaperone that increases the ATP-binding affinity of the ATP-hydrolyzing subunit KdpB by the formation of a transient KdpB/KdpC/ATP ternary complex. The protein is Potassium-transporting ATPase KdpC subunit of Burkholderia ambifaria (strain ATCC BAA-244 / DSM 16087 / CCUG 44356 / LMG 19182 / AMMD) (Burkholderia cepacia (strain AMMD)).